The sequence spans 434 residues: 3-isopropylmalate dehydratase large subunit 1 (434 aa).

[4Fe-4S] cluster is bound by residues Cys-308, Cys-368, and Cys-371.

Belongs to the aconitase/IPM isomerase family. LeuC type 2 subfamily. Heterodimer of LeuC and LeuD. [4Fe-4S] cluster serves as cofactor.

It catalyses the reaction (2R,3S)-3-isopropylmalate = (2S)-2-isopropylmalate. The protein operates within amino-acid biosynthesis; L-leucine biosynthesis; L-leucine from 3-methyl-2-oxobutanoate: step 2/4. In terms of biological role, catalyzes the isomerization between 2-isopropylmalate and 3-isopropylmalate, via the formation of 2-isopropylmaleate. The polypeptide is 3-isopropylmalate dehydratase large subunit 1 (Deinococcus radiodurans (strain ATCC 13939 / DSM 20539 / JCM 16871 / CCUG 27074 / LMG 4051 / NBRC 15346 / NCIMB 9279 / VKM B-1422 / R1)).